A 368-amino-acid polypeptide reads, in one-letter code: Polynucleotide 5'-hydroxyl-kinase NOL9 (368 aa).

36-43 (GPKNSGKS) is an ATP binding site.

Belongs to the Clp1 family. NOL9/GRC3 subfamily.

The protein resides in the nucleus. The protein localises to the nucleolus. In terms of biological role, polynucleotide 5'-kinase involved in rRNA processing. The polypeptide is Polynucleotide 5'-hydroxyl-kinase NOL9 (Arabidopsis thaliana (Mouse-ear cress)).